The following is a 384-amino-acid chain: Lipid-A-disaccharide synthase (384 aa).

The protein belongs to the LpxB family.

It carries out the reaction a lipid X + a UDP-2-N,3-O-bis[(3R)-3-hydroxyacyl]-alpha-D-glucosamine = a lipid A disaccharide + UDP + H(+). The protein operates within bacterial outer membrane biogenesis; LPS lipid A biosynthesis. Its function is as follows. Condensation of UDP-2,3-diacylglucosamine and 2,3-diacylglucosamine-1-phosphate to form lipid A disaccharide, a precursor of lipid A, a phosphorylated glycolipid that anchors the lipopolysaccharide to the outer membrane of the cell. The chain is Lipid-A-disaccharide synthase from Cellvibrio japonicus (strain Ueda107) (Pseudomonas fluorescens subsp. cellulosa).